Consider the following 225-residue polypeptide: MNHLWLFIVTVSCIYLVYGQGEESVPCKVKFMGTACPLGRLVCEEDGDCLGVNQVCCYDGCGTTCHNKTTTLIPSTTQPQIQPIIPSTQPQIQPIIPSTQPQIQPFIPSTQPQIQRIIPSPELLCPVVTVRYAFCRFSTYTPCHTSNDCAVPGMKCCPDVCGKRCKFPINSTDHQQFQQTPLKPTVPLPQYQQTPLQPTVPSSQPPLQPTVPSPQSYNYKGACST.

The N-terminal stretch at 1–19 (MNHLWLFIVTVSCIYLVYG) is a signal peptide. 4 disulfide bridges follow: Cys-27–Cys-57, Cys-36–Cys-61, Cys-43–Cys-56, and Cys-49–Cys-65. Positions 27–68 (CKVKFMGTACPLGRLVCEEDGDCLGVNQVCCYDGCGTTCHNK) constitute a WAP 1; atypical domain. Asn-67 is a glycosylation site (N-linked (GlcNAc...) asparagine). The 53-residue stretch at 117 to 169 (IIPSPELLCPVVTVRYAFCRFSTYTPCHTSNDCAVPGMKCCPDVCGKRCKFPI) folds into the WAP 2 domain. 4 disulfides stabilise this stretch: Cys-125-Cys-157, Cys-135-Cys-161, Cys-143-Cys-156, and Cys-149-Cys-165. N-linked (GlcNAc...) asparagine glycosylation is present at Asn-170. The tract at residues 176 to 225 (QFQQTPLKPTVPLPQYQQTPLQPTVPSSQPPLQPTVPSPQSYNYKGACST) is disordered. A compositionally biased stretch (low complexity) spans 188–201 (LPQYQQTPLQPTVP). Positions 203 to 212 (SQPPLQPTVP) are enriched in pro residues. Residues 213–225 (SPQSYNYKGACST) show a composition bias toward polar residues.

Component of the acid-soluble organic matrix of calcified layers of the shell (at protein level).

Its subcellular location is the secreted. The protein is Perlwapin-like protein of Lottia gigantea (Giant owl limpet).